The following is a 601-amino-acid chain: Nuclear envelope protein ndc1 (601 aa).

The Cytoplasmic portion of the chain corresponds to 1–34 (MVMLRTSFPSGSRTKAVRYHTLLRPILQQRFLRA). Residues 35-55 (CFALLCLCCITSYWFSSGPFI) form a helical membrane-spanning segment. Topologically, residues 56–58 (SLS) are perinuclear space. Residues 59 to 79 (FWFLSLVRGFVCFFFMFPYFV) traverse the membrane as a helical segment. The Cytoplasmic portion of the chain corresponds to 80–106 (MLKSRMSTQKVTKQSLGAQLFYDFSPK). The chain crosses the membrane as a helical span at residues 107 to 127 (SFFLVYLTFAVSVSCLCLFYI). Over 128–153 (KGHASSIRLQWIASPNAYELPSLNER) the chain is Perinuclear space. Residues 154 to 174 (FVYMTYFSHILILALTVEHLY) form a helical membrane-spanning segment. Residues 175–182 (LQRDSPSR) are Cytoplasmic-facing. A helical membrane pass occupies residues 183-203 (PVINVSFFNYIFQNLGWLIRF). Residues 204–256 (SFRKSIICCLFTPFSYAILRSYIWRFAALLTSCCRRIAYTKTPPKWPLSLRLL) are Perinuclear space-facing. Residues 257–277 (LHSFWMAFIVCLTFQIALLIF) form a helical membrane-spanning segment. The Cytoplasmic portion of the chain corresponds to 278 to 601 (RVFLYSGPMI…VLFREYKSNS (324 aa)).

The protein belongs to the NDC1 family. In terms of assembly, component of the nuclear pore complex (NPC). NPC constitutes the exclusive means of nucleocytoplasmic transport. NPCs allow the passive diffusion of ions and small molecules and the active, nuclear transport receptor-mediated bidirectional transport of macromolecules such as proteins, RNAs, ribonucleoparticles (RNPs), and ribosomal subunits across the nuclear envelope. Due to its 8-fold rotational symmetry, all subunits are present with 8 copies or multiples thereof.

It is found in the nucleus. Its subcellular location is the nuclear pore complex. The protein resides in the nucleus membrane. The protein localises to the cytoplasm. It localises to the cytoskeleton. It is found in the microtubule organizing center. Its subcellular location is the spindle pole body. In terms of biological role, component of the nuclear pore complex (NPC) and the spindle pole body (SPB), which plays a key role in de novo assembly and insertion of both structures in the nuclear envelope. Involved in the formation of the bipolar mitotic spindle. Anchors the spindle pole body in the nuclear envelope. The chain is Nuclear envelope protein ndc1 (cut11) from Schizosaccharomyces pombe (strain 972 / ATCC 24843) (Fission yeast).